Here is a 2024-residue protein sequence, read N- to C-terminus: Pericentriolar material 1 protein (2024 aa).

Residues 1–92 (MATGGGPFED…FPHSRYMSQM (92 aa)) are disordered. Ala-2 bears the N-acetylalanine mark. Positions 2–1460 (ATGGGPFEDG…TWIASNSELT (1459 aa)) are mediates interaction with DZIP1. A compositionally biased stretch (basic and acidic residues) spans 43 to 61 (RSSEKNKKKFGVESDKRVT). Phosphoserine occurs at positions 65, 68, 69, 93, 110, 116, and 119. A disordered region spans residues 111-163 (DLDQRSIGSDSQGRATAANNKRQLSENRKPFNFLPMQINTNKSKDASTNPPNR). Composition is skewed to polar residues over residues 116–132 (SIGSDSQGRATAANNKR) and 147–163 (QINTNKSKDASTNPPNR). Residue Asn-159 is modified to Phosphoserine; in variant Ser-159. Positions 218–301 (KASSMREDLV…QLRALQGRQA (84 aa)) form a coiled coil. A disordered region spans residues 354-392 (RDSQPPAVPDNRRQAESLSLTREVSQSRKPSASERLPDE). Over residues 369–383 (ESLSLTREVSQSRKP) the composition is skewed to polar residues. Ser-370 carries the post-translational modification Phosphoserine. A Phosphoserine; by PLK4 modification is found at Ser-372. Ser-384 carries the phosphoserine modification. N6-acetyllysine is present on Lys-399. A coiled-coil region spans residues 400 to 424 (MRVLQEKKQKMDKLLGELHTLRDQH). Disordered regions lie at residues 421 to 492 (RDQH…KLQK) and 523 to 548 (ENRKDEETEESEYDSEHENSEPVTNI). Polar residues-rich tracts occupy residues 425–445 (LNNSSSSPQRSVDQRSTSAPS) and 456–477 (GESNSLTSSVPYPTASLVSQNE). A coiled-coil region spans residues 487-543 (SEKLQKLNEVRKRLNELRELVHYYEQTSDMMTDAVNENRKDEETEESEYDSEHENSE). A Phosphoserine modification is found at Ser-588. 2 disordered regions span residues 614-652 (HVAQGEDDEEEEEEAEEEGVSGASLSSHRSSLVDEHPED) and 699-726 (FYPAEEDTKQNSNNTRGNANKTQKDTGV). A compositionally biased stretch (acidic residues) spans 618–632 (GEDDEEEEEEAEEEG). Residues 634–643 (SGASLSSHRS) are compositionally biased toward low complexity. Ser-643 carries the post-translational modification Phosphoserine. Residues 651 to 682 (EDAEFEQKINRLMAAKQKLRQLQDLVAMVQDD) adopt a coiled-coil conformation. A compositionally biased stretch (polar residues) spans 708–719 (QNSNNTRGNANK). Coiled coils occupy residues 726-769 (VNEK…LQTA) and 824-858 (SEMRRHEMLREELRQRRKQLEALMAEHQRRQGLAE). Phosphothreonine is present on Thr-859. Phosphoserine occurs at positions 861, 866, 869, and 872. Thr-877 bears the Phosphothreonine mark. Residues 915-947 (TDEEEEEEQDASSNDNFSVCPSNSVNHNSYNGK) are disordered. Polar residues predominate over residues 925-946 (ASSNDNFSVCPSNSVNHNSYNG). 4 positions are modified to phosphoserine: Ser-960, Ser-977, Ser-988, and Ser-991. Residues 1063–1089 (TQLTWQQNNVQRLKQMLNELMRQQNQH) adopt a coiled-coil conformation. 2 disordered regions span residues 1085–1109 (QQNQHPEKPGGKERGSSASHPPSPS) and 1152–1211 (FSQN…RTPW). Positions 1089-1099 (HPEKPGGKERG) are enriched in basic and acidic residues. Over residues 1152–1173 (FSQNISTPSEQQQPLAQNSSGK) the composition is skewed to polar residues. Ser-1185 and Ser-1188 each carry phosphoserine. The segment covering 1192 to 1201 (EKPRNKKLPE) has biased composition (basic and acidic residues). Phosphoserine is present on residues Ser-1229 and Ser-1231. A compositionally biased stretch (polar residues) spans 1232–1246 (VEKSTSSNRKNQLDT). Residues 1232–1342 (VEKSTSSNRK…RHSAQTEEPV (111 aa)) form a disordered region. Residues Ser-1257, Ser-1260, Ser-1262, and Ser-1263 each carry the phosphoserine modification. The segment at 1279 to 1799 (TRKASAQASL…TQALTNYGSG (521 aa)) is interaction with HAP1. A compositionally biased stretch (basic residues) spans 1296–1313 (KSKSKKRNSTQLKSRVKN). Phosphoserine is present on residues Ser-1318 and Ser-1320. Thr-1468 bears the Phosphothreonine mark. Positions 1515–1539 (IHLDQALARMREYERMKTEAESNSN) form a coiled coil. Ser-1573, Ser-1697, Ser-1730, Ser-1765, Ser-1768, Ser-1776, and Ser-1782 each carry phosphoserine. 2 disordered regions span residues 1725–1868 (LEDH…NNCP) and 1880–1944 (EQPL…PVLV). Residues 1768–1777 (SDQEEDEESE) are compositionally biased toward acidic residues. The segment covering 1783 to 1797 (INLSKAETQALTNYG) has biased composition (polar residues). The segment covering 1799–1815 (GEDENEDEEMEEFEEGP) has biased composition (acidic residues). Positions 1818–1827 (VQTSLQANTE) are enriched in polar residues. Over residues 1835-1860 (DEQVLQRDFKKTAESKNVPLEREATS) the composition is skewed to basic and acidic residues. The span at 1905–1916 (PLRLPEMEPLVP) shows a compositional bias: low complexity. The segment at 1913-2024 (PLVPRVKEVK…EPETVGAQSI (112 aa)) is interaction with BBS4. Over residues 1924-1933 (AQETPESSLA) the composition is skewed to polar residues. A phosphoserine mark is found at Ser-1958 and Ser-1977. Residues 2005–2024 (ELAGNSETLKEPETVGAQSI) form a disordered region.

It belongs to the PCM1 family. Self-associates. Interacts with C2CD3. Interacts with BBS4, BBS8, CETN3, HAP1, NDE1, NDEL1, MAP1LC3B, GABARAPAL2, and GABARAP. Interacts with CEP131; the interaction increases in response to ultraviolet light (UV) radiation. Associates with microtubule; association to microtubule is reduced in response to cellular stress, such as ultraviolet light (UV) radiation or heat shock, in a process that requires p38 MAP kinase signaling. Interacts with CFAP263. Interacts with SSX2IP. Interacts with CCDC13. Interacts with CEP290. Interacts with PARD6A. Interacts with KIAA0753/OFIP, CEP20/FOR20 and OFD1; the interaction with CEP20/FOR20 and OFD1 may be mediated by KIAA0753/OFIP. Interacts with CCDC66. Interacts with CCDC61. Interacts with DZIP1; localizes DZIP1 and the associated BBSome to centriolar satellite. Interacts with CSTPP1, TTLL1, TPGS1 and LRRC49. Interacts with CFAP53. Ubiquitinated. Undergoes monoubiquitination catalyzed by the E3 ubiquitin-protein ligase MIB1 in proliferating cells, preventing cilia formation. Monoubiquitination by MIB1 is inhibited in response to cellular stress, such as ultraviolet light (UV) radiation or heat shock, resulting in cilia formation initiation. Post-translationally, variant Ser-159 is phosphorylated. In terms of processing, phosphorylated on multiple serine and threonine residues by DYRK3 during the G2-to-M transition, after the nuclear-envelope breakdown. Phosphorylation by DYRK3 promotes disassembly of pericentriolar material. Phosphorylation at Ser-372 mediated by PLK4 is required to maintain the integrity of centriolar satellites. As to expression, expressed in blood, bone marrow, breast, lymph node, ovary and thyroid.

The protein localises to the cytoplasm. The protein resides in the cytoskeleton. It is found in the microtubule organizing center. Its subcellular location is the centrosome. It localises to the cytoplasmic granule. The protein localises to the centriolar satellite. The protein resides in the cilium basal body. Functionally, required for centrosome assembly and function. Essential for the correct localization of several centrosomal proteins including CEP250, CETN3, PCNT and NEK2. Required to anchor microtubules to the centrosome. Also involved in cilium biogenesis by recruiting the BBSome, a ciliary protein complex involved in cilium biogenesis, to the centriolar satellites. Recruits the tubulin polyglutamylase complex (TPGC) to centriolar satellites. In Homo sapiens (Human), this protein is Pericentriolar material 1 protein.